Here is a 645-residue protein sequence, read N- to C-terminus: Acetyl-coenzyme A synthetase (645 aa).

Residues arginine 190–arginine 193 and threonine 308 contribute to the CoA site. ATP-binding positions include glycine 384–proline 386, aspartate 408–threonine 413, aspartate 497, and arginine 512. Serine 520 provides a ligand contact to CoA. Arginine 523 provides a ligand contact to ATP. Mg(2+)-binding residues include valine 534, histidine 536, and valine 539. Lysine 606 carries the N6-acetyllysine modification.

This sequence belongs to the ATP-dependent AMP-binding enzyme family. It depends on Mg(2+) as a cofactor. Acetylated. Deacetylation by the SIR2-homolog deacetylase activates the enzyme.

It catalyses the reaction acetate + ATP + CoA = acetyl-CoA + AMP + diphosphate. In terms of biological role, catalyzes the conversion of acetate into acetyl-CoA (AcCoA), an essential intermediate at the junction of anabolic and catabolic pathways. AcsA undergoes a two-step reaction. In the first half reaction, AcsA combines acetate with ATP to form acetyl-adenylate (AcAMP) intermediate. In the second half reaction, it can then transfer the acetyl group from AcAMP to the sulfhydryl group of CoA, forming the product AcCoA. In Halorhodospira halophila (strain DSM 244 / SL1) (Ectothiorhodospira halophila (strain DSM 244 / SL1)), this protein is Acetyl-coenzyme A synthetase.